The sequence spans 771 residues: Tetratricopeptide repeat-containing protein trd-1 (771 aa).

TPR repeat units follow at residues Leu-389–Leu-415, Ile-416–Arg-449, Ala-451–Gln-484, Leu-485–His-518, Glu-520–His-552, and Pro-553–Gly-586.

The protein belongs to the TTC27 family. As to expression, expressed in the spermatheca.

The protein resides in the cytoplasm. Its function is as follows. Developmental protein required for cell fate determination in both the germline and seam cells of the developing epidermis. Specifically, involved in sex determination and may function in parallel or downstream of other sex determination factors, including tra-2 and fem-3, to promote oogenesis in its role in the regulation of the switch from spermatogenesis to oogenesis in the gonads. Also implicated in the mitosis to meiosis switch in distal tip cells. This Caenorhabditis elegans protein is Tetratricopeptide repeat-containing protein trd-1.